The sequence spans 941 residues: Coiled-coil domain-containing protein 39 (941 aa).

4 coiled-coil regions span residues 16–122 (AIPV…ENGI), 164–273 (AQQD…ESEI), 306–605 (QLKG…EIKV), and 665–825 (IKAA…EEQD). Positions 868–941 (PTASTKGSRQ…SNVKSKKSSK (74 aa)) are disordered. Composition is skewed to low complexity over residues 871 to 903 (STKG…SQSS) and 914 to 934 (SSSL…SSNV). 2 positions are modified to phosphoserine: serine 892 and serine 900.

Belongs to the CCDC39 family. In terms of tissue distribution, mainly expressed in nasal brushings and, to a lesser extent, in lungs and testis.

It localises to the cytoplasm. It is found in the cytoskeleton. The protein localises to the cilium axoneme. Its function is as follows. Required for assembly of dynein regulatory complex (DRC) and inner dynein arm (IDA) complexes, which are responsible for ciliary beat regulation, thereby playing a central role in motility in cilia and flagella. Probably acts together with CCDC40 to form a molecular ruler that determines the 96 nanometer (nm) repeat length and arrangements of components in cilia and flagella. Not required for outer dynein arm complexes assembly. The polypeptide is Coiled-coil domain-containing protein 39 (Homo sapiens (Human)).